Reading from the N-terminus, the 158-residue chain is Cathelicidin-6 (158 aa).

Positions 1-29 are cleaved as a signal peptide; sequence METQRASLSLGRWSLWLLLLGLALPSASA. The propeptide occupies 30–131; the sequence is QALSYREAVL…NVTCEELQSV (102 aa). Cystine bridges form between C86–C97 and C108–C125.

The protein belongs to the cathelicidin family.

The protein localises to the secreted. Its function is as follows. Exerts a potent antimicrobial activity against Gram-negative and Gram-positive bacteria, including methicillin-resistant Staphylococcus aureus, and fungi. The protein is Cathelicidin-6 (CATHL6) of Bos taurus (Bovine).